The sequence spans 88 residues: Small ribosomal subunit protein bS16 (88 aa).

Belongs to the bacterial ribosomal protein bS16 family.

The sequence is that of Small ribosomal subunit protein bS16 from Syntrophomonas wolfei subsp. wolfei (strain DSM 2245B / Goettingen).